The following is a 393-amino-acid chain: S-adenosylmethionine synthase 2 (393 aa).

Residue glutamate 9 participates in Mg(2+) binding. Histidine 15 contributes to the ATP binding site. Glutamate 43 provides a ligand contact to K(+). The L-methionine site is built by glutamate 56 and glutamine 99. ATP-binding positions include 167–169, 235–238, aspartate 246, 252–253, alanine 269, lysine 273, and lysine 277; these read DGK, SGRF, and RK. Aspartate 246 provides a ligand contact to L-methionine. Lysine 277 lines the L-methionine pocket.

This sequence belongs to the AdoMet synthase family. In terms of assembly, homotetramer. Mn(2+) serves as cofactor. The cofactor is Mg(2+). It depends on Co(2+) as a cofactor. K(+) is required as a cofactor.

The protein localises to the cytoplasm. It catalyses the reaction L-methionine + ATP + H2O = S-adenosyl-L-methionine + phosphate + diphosphate. It functions in the pathway amino-acid biosynthesis; S-adenosyl-L-methionine biosynthesis; S-adenosyl-L-methionine from L-methionine: step 1/1. In terms of biological role, catalyzes the formation of S-adenosylmethionine from methionine and ATP. The reaction comprises two steps that are both catalyzed by the same enzyme: formation of S-adenosylmethionine (AdoMet) and triphosphate, and subsequent hydrolysis of the triphosphate. The protein is S-adenosylmethionine synthase 2 (SAMS2) of Elaeagnus umbellata (Autumn olive).